A 556-amino-acid polypeptide reads, in one-letter code: Glutamine--tRNA ligase (556 aa).

Positions proline 34–histidine 44 match the 'HIGH' region motif. ATP-binding positions include glutamate 35–asparagine 37 and histidine 41–serine 47. Residues aspartate 67 and tyrosine 212 each contribute to the L-glutamine site. Residues threonine 231, arginine 261–leucine 262, and methionine 269–lysine 271 each bind ATP. Positions isoleucine 268–arginine 272 match the 'KMSKS' region motif.

The protein belongs to the class-I aminoacyl-tRNA synthetase family. As to quaternary structure, monomer.

The protein localises to the cytoplasm. It catalyses the reaction tRNA(Gln) + L-glutamine + ATP = L-glutaminyl-tRNA(Gln) + AMP + diphosphate. The protein is Glutamine--tRNA ligase of Sodalis glossinidius (strain morsitans).